The primary structure comprises 711 residues: MLNPIVRKFQYGQHTVTLETGMMARQATAAVMVSMDDTAVFVTVVGQKKAKPGQDFFPLTVNYQERTYAAGKIPGGFFRREGRPSEGETLIARLIDRPVRPLFPEGFVNEVQVIATVVSVNPQVNPDIVAMIGASAALSLSGIPFNGPIGAARVGYINDQYVLNPTQEELKSSKLDLVVAGTEAAVLMVESEAELLSEDQMLGAVVFGHEQQQIVIQNINDLVKEAGKPRWDWQPEAVNEALNARVAALAESRLSDAYRITDKQERYAQVDVIKSETIATLVAEDETLDANELGEILHAIEKNVVRSRVLAGEPRIDGREKDMIRGLDVRTGVLPRTHGSALFTRGETQALVTATLGTARDAQNIDELMGERTDSFLFHYNFPPYSVGETGMVGSPKRREIGHGRLAKRGVLAVMPTIEEFPYTVRVVSEITESNGSSSMASVCGASLALMDAGVPVKAAVAGIAMGLVKEGDNFVVLSDILGDEDHLGDMDFKVAGSRDGISALQMDIKIEGITKEIMQVALNQAKGARLHILGVMEQAINAPRGDISEFAPRIHTIKINPDKIKDVIGKGGSVIRALTEETGTTIEIEDDGTVKIAATDGDKAQHAIRRIEEITAEIEVGRIYNGKVTRIVDFGAFVAIGGGKEGLVHISQIADKRVEKVTDYLQMGQEVPVKVLEVDRQGRVRLSIKEATEQTPSAAAPEAPAAEQGE.

The Mg(2+) site is built by D486 and D492. A KH domain is found at 553 to 612 (PRIHTIKINPDKIKDVIGKGGSVIRALTEETGTTIEIEDDGTVKIAATDGDKAQHAIRRI). The 69-residue stretch at 622–690 (GRIYNGKVTR…RQGRVRLSIK (69 aa)) folds into the S1 motif domain. The interval 689 to 711 (IKEATEQTPSAAAPEAPAAEQGE) is disordered. Low complexity predominate over residues 694 to 711 (EQTPSAAAPEAPAAEQGE).

It belongs to the polyribonucleotide nucleotidyltransferase family. Component of the RNA degradosome, which is a multiprotein complex involved in RNA processing and mRNA degradation. Requires Mg(2+) as cofactor.

It is found in the cytoplasm. It carries out the reaction RNA(n+1) + phosphate = RNA(n) + a ribonucleoside 5'-diphosphate. In terms of biological role, involved in mRNA degradation. Catalyzes the phosphorolysis of single-stranded polyribonucleotides processively in the 3'- to 5'-direction. In Klebsiella pneumoniae subsp. pneumoniae (strain ATCC 700721 / MGH 78578), this protein is Polyribonucleotide nucleotidyltransferase.